Here is a 207-residue protein sequence, read N- to C-terminus: Casparian strip membrane protein 3 (207 aa).

At 1 to 45 the chain is on the cytoplasmic side; that stretch reads MDSTKSTEETAINIPRESSSTKHKIAVAAVKAVATPHKRGGMKRG. A helical transmembrane segment spans residues 46–66; it reads VAIFDFILRICALAAALAATA. Over 67–95 the chain is Extracellular; it reads TMGTTDQTLPFFTQFFQFQASYDDLPTFT. A helical membrane pass occupies residues 96 to 116; that stretch reads FFVIANAIASGYLVLSLPFSI. At 117–128 the chain is on the cytoplasmic side; sequence VAIVRPHVTGVK. A helical membrane pass occupies residues 129–149; that stretch reads LLLLILDTVLVAFTTAAAASA. Residues 150–181 lie on the Extracellular side of the membrane; that stretch reads AAIVYLAHNGNSNTNWFAICQQFNDFCQRTSG. Residues 182–202 traverse the membrane as a helical segment; sequence AVVASFIAAAIFIFLVVLSAV. At 203–207 the chain is on the cytoplasmic side; sequence ALRRH.

Belongs to the Casparian strip membrane proteins (CASP) family. As to quaternary structure, homodimer and heterodimers.

It localises to the cell membrane. Functionally, regulates membrane-cell wall junctions and localized cell wall deposition. Required for establishment of the Casparian strip membrane domain (CSD) and the subsequent formation of Casparian strips, a cell wall modification of the root endodermis that determines an apoplastic barrier between the intraorganismal apoplasm and the extraorganismal apoplasm and prevents lateral diffusion. The protein is Casparian strip membrane protein 3 of Erythranthe guttata (Yellow monkey flower).